A 327-amino-acid polypeptide reads, in one-letter code: MSESEKIKKVSIVIPVYNEQESLPILIERTSAACKLLTQPYEIILVDDGSSDNSAELLTAAANEPESHIIAVLLNRNYGQHSAIMAGFNQVSGDLIITLDADLQNPPEEIPRLVSVAEEGYDVVGTVRAHRQDSLFRKTASRMINMMIQRATGKSMGDYGCMLRAYRRHIVEAMLHCHERSTFIPILANTFARRTTEITVHHAEREFGDSKYSLMKLINLMYDLITCLTTTPLRLLSLVGSVIALSGFTLAVLLVVLRLVFGPEWAGGGVFTLFAVLFMFIGAQFVGMGLLGEYIGRIYNDVRARPRYFIQKVVGAEQTENNQEVEK.

A run of 2 helical transmembrane segments spans residues leucine 236–valine 256 and valine 270–leucine 290.

This sequence belongs to the glycosyltransferase 2 family.

Its subcellular location is the cell inner membrane. It carries out the reaction UDP-4-deoxy-4-formamido-beta-L-arabinose + di-trans,octa-cis-undecaprenyl phosphate = 4-deoxy-4-formamido-alpha-L-arabinopyranosyl di-trans,octa-cis-undecaprenyl phosphate + UDP. It functions in the pathway glycolipid biosynthesis; 4-amino-4-deoxy-alpha-L-arabinose undecaprenyl phosphate biosynthesis; 4-amino-4-deoxy-alpha-L-arabinose undecaprenyl phosphate from UDP-4-deoxy-4-formamido-beta-L-arabinose and undecaprenyl phosphate: step 1/2. It participates in bacterial outer membrane biogenesis; lipopolysaccharide biosynthesis. Catalyzes the transfer of 4-deoxy-4-formamido-L-arabinose from UDP to undecaprenyl phosphate. The modified arabinose is attached to lipid A and is required for resistance to polymyxin and cationic antimicrobial peptides. This chain is Undecaprenyl-phosphate 4-deoxy-4-formamido-L-arabinose transferase, found in Yersinia enterocolitica serotype O:8 / biotype 1B (strain NCTC 13174 / 8081).